Here is a 535-residue protein sequence, read N- to C-terminus: MEVAAMEISTSLLLTTVALSVIVCYALVFSRAGKARAPLPLPPGPRGWPVLGNLPQLGGKTHQTLHEMTKVYGPLIRLRFGSSDVVVAGSAPVAAQFLRTHDANFSSRPRNSGGEHMAYNGRDVVFGPYGPRWRAMRKICAVNLFSARALDDLRAFREREAVLMVRSLAEASAAPGSSSPAAVVLGKEVNVCTTNALSRAAVGRRVFAAGAGEGAREFKEIVLEVMEVGGVLNVGDFVPALRWLDPQGVVARMKKLHRRFDDMMNAIIAERRAGSLLKPTDSREEGKDLLGLLLAMVQEQEWLAAGEDDRITDTEIKALILNLFVAGTDTTSTIVEWTMAELIRHPDILKHAQEELDVVVGRDRLLSESDLSHLTFFHAIIKETFRLHPSTPLSLPRMASEECEIAGYRIPKGAELLVNVWGIARDPAIWPDPLEYKPSRFLPGGTHTDVDVKGNDFGLIPFGAGRRICAGLSWGLRMVTMTAATLVHAFDWQLPADQTPDKLNMDEAFTLLLQRAEPLVVHPVPRLLPSAYNIA.

A helical membrane pass occupies residues 8–28 (ISTSLLLTTVALSVIVCYALV). Cys469 provides a ligand contact to heme.

It belongs to the cytochrome P450 family. Heme serves as cofactor.

It is found in the membrane. The catalysed reaction is a 3'-unsubstituted flavone + reduced [NADPH--hemoprotein reductase] + O2 = a 3'-hydroxyflavone + oxidized [NADPH--hemoprotein reductase] + H2O + H(+). The protein operates within secondary metabolite biosynthesis; flavonoid biosynthesis. Catalyzes the 3'-hydroxylation of the flavonoid B-ring to the 3',4'-hydroxylated state. Catalyzes in vitro 3'-hydroxylation of different flavonoids. Catalyzes the conversion of apigenin to luteolin, naringenin to eriodictyol, and kaempferol to quercetin. Possesses specific 5'-hydroxylase activity toward chrysoeriol (a 3'-methoxylated flavone) and is indispensable for tricin formation. Converts chrysoeriol to selgin, a precursor of tricin, suggesting that chrysoeriol, instead of tricetin, is an intermediate in tricin biosynthesis. In Oryza sativa subsp. japonica (Rice), this protein is Flavonoid 3'-monooxygenase CYP75B4.